Consider the following 153-residue polypeptide: Penitrem biosynthesis cluster 1 protein I (153 aa).

Its pathway is secondary metabolite biosynthesis. Part of the gene cluster that mediates the biosynthesis of the indole diterpenes penitrems. The geranylgeranyl diphosphate (GGPP) synthase ptmG catalyzes the first step in penitrem biosynthesis via conversion of farnesyl pyrophosphate and isopentyl pyrophosphate into geranylgeranyl pyrophosphate (GGPP). Condensation of indole-3-glycerol phosphate with GGPP by the prenyl transferase ptmC then forms 3-geranylgeranylindole (3-GGI). Epoxidation by the FAD-dependent monooxygenase ptmM leads to a epoxidized-GGI that is substrate of the terpene cyclase ptmB for cyclization to yield paspaline. Paspaline is subsequently converted to 13-desoxypaxilline by the cytochrome P450 monooxygenase ptmP, the latter being then converted to paxilline by the cytochrome P450 monooxygenase ptmQ. Paxilline is converted to beta-paxitriol via C-10 ketoreduction by the short-chain dehydrogenase ptmH which can be monoprenylated at the C-20 by the indole diterpene prenyltransferase ptmD. A two-step elimination (acetylation and elimination) process performed by the O-acetyltransferase ptmV and ptmI leads to the production of the prenylated form of penijanthine. The FAD-linked oxidoreductase ptmO then converts the prenylated form of penijanthine into PC-M5 which is in turn transformed into PC-M4 by the aromatic dimethylallyltransferase ptmE. Five sequential oxidative transformations performed by the cytochrome P450 monooxygenases ptmK, ptmU, ptmL, ptmN and ptmJ yield the various penitrem compounds. PtmK, ptmU and ptmM are involved in the formation of the key bicyclic ring of penitrem C via the formation of the intermediates secopenitrem D and penitrem D. PtmL catalyzes the epoxidation of penitrem D and C to yield penitrem B and F, respectively. PtmJ catalyzes the last benzylic hydroxylation to convert penitrem B to prenitrem E and penitrem F to penitrem A. The sequence is that of Penitrem biosynthesis cluster 1 protein I from Penicillium ochrochloron.